A 68-amino-acid chain; its full sequence is Large ribosomal subunit protein bL35 (68 aa).

It belongs to the bacterial ribosomal protein bL35 family.

The sequence is that of Large ribosomal subunit protein bL35 from Rickettsia akari (strain Hartford).